The sequence spans 339 residues: Glycerol-3-phosphate dehydrogenase [NAD(P)+] (339 aa).

NADPH contacts are provided by Ser11, Trp12, and Lys109. Residues Lys109, Gly140, and Ser142 each contribute to the sn-glycerol 3-phosphate site. Position 144 (Ala144) interacts with NADPH. Lys195, Asp249, Ser259, Arg260, and Asn261 together coordinate sn-glycerol 3-phosphate. Lys195 functions as the Proton acceptor in the catalytic mechanism. Position 260 (Arg260) interacts with NADPH. NADPH is bound by residues Val284 and Glu286.

Belongs to the NAD-dependent glycerol-3-phosphate dehydrogenase family.

The protein localises to the cytoplasm. It carries out the reaction sn-glycerol 3-phosphate + NAD(+) = dihydroxyacetone phosphate + NADH + H(+). It catalyses the reaction sn-glycerol 3-phosphate + NADP(+) = dihydroxyacetone phosphate + NADPH + H(+). Its pathway is membrane lipid metabolism; glycerophospholipid metabolism. Catalyzes the reduction of the glycolytic intermediate dihydroxyacetone phosphate (DHAP) to sn-glycerol 3-phosphate (G3P), the key precursor for phospholipid synthesis. The polypeptide is Glycerol-3-phosphate dehydrogenase [NAD(P)+] (Lactobacillus helveticus (strain DPC 4571)).